A 402-amino-acid chain; its full sequence is Acyl-[acyl-carrier-protein] desaturase 3, chloroplastic (402 aa).

Disordered regions lie at residues 1–25 (MSLT…GGAS) and 38–66 (VGGI…THTL). The transit peptide at 1-32 (MSLTGCLPPRPPCSMRRRTSGGGASVSPVVVM) directs the protein to the chloroplast. Fe cation is bound by residues Glu139, Glu178, His181, Glu231, Glu264, and His267.

This sequence belongs to the fatty acid desaturase type 2 family. As to quaternary structure, homodimer. Fe(2+) serves as cofactor.

The protein localises to the plastid. It is found in the chloroplast. Its pathway is lipid metabolism; fatty acid metabolism. Introduces a cis double bond in the acyl chain of an acyl-[acyl-carrier protein]. This is Acyl-[acyl-carrier-protein] desaturase 3, chloroplastic from Oryza sativa subsp. indica (Rice).